Here is a 542-residue protein sequence, read N- to C-terminus: 4-coumarate--CoA ligase-like 1 (542 aa).

ATP contacts are provided by Ser-189, Ser-190, Gly-191, Thr-192, Thr-193, and Lys-197. Tyr-237 is a binding site for (E)-4-coumaroyl-AMP. Arg-258 is a CoA binding site. An SBD1 region spans residues 260–331 (DLRIFLNALI…AKFPNVQVQE (72 aa)). Positions 309, 331, 332, and 336 each coordinate (E)-4-coumaroyl-AMP. Glu-331, Ala-332, Thr-336, Asp-420, and Arg-435 together coordinate ATP. The SBD2 stretch occupies residues 332-399 (AYGLTEHSCI…VRSQCVMQGY (68 aa)). Residues Lys-437 and Lys-441 each contribute to the (E)-4-coumaroyl-AMP site. The CoA site is built by Lys-443 and Gly-444. An ATP-binding site is contributed by Lys-526.

This sequence belongs to the ATP-dependent AMP-binding enzyme family. As to quaternary structure, interacts with TKPR1, PKSA and PKSB. Mg(2+) is required as a cofactor. Mostly confined to anther tapetal cells.

It is found in the endoplasmic reticulum. It catalyses the reaction (E)-4-coumarate + ATP + CoA = (E)-4-coumaroyl-CoA + AMP + diphosphate. The enzyme catalyses (E)-4-coumarate + ATP + H(+) = (E)-4-coumaroyl-AMP + diphosphate. The catalysed reaction is (E)-4-coumaroyl-AMP + CoA = (E)-4-coumaroyl-CoA + AMP + H(+). Its function is as follows. Carboxylate--CoA ligase that may use 4-coumarate as substrate. Follows a two-step reaction mechanism, wherein the carboxylate substrate first undergoes adenylation by ATP, followed by a thioesterification in the presence of CoA to yield the final CoA thioester. The polypeptide is 4-coumarate--CoA ligase-like 1 (Arabidopsis thaliana (Mouse-ear cress)).